The chain runs to 84 residues: Cell division topological specificity factor (84 aa).

This sequence belongs to the MinE family.

Functionally, prevents the cell division inhibition by proteins MinC and MinD at internal division sites while permitting inhibition at polar sites. This ensures cell division at the proper site by restricting the formation of a division septum at the midpoint of the long axis of the cell. The chain is Cell division topological specificity factor from Azotobacter vinelandii (strain DJ / ATCC BAA-1303).